The chain runs to 43 residues: Protein PsbN (43 aa).

A helical transmembrane segment spans residues 7–27; sequence VAIFISGLLVSFTGYALYTAF.

The protein belongs to the PsbN family.

It localises to the plastid. Its subcellular location is the chloroplast thylakoid membrane. In terms of biological role, may play a role in photosystem I and II biogenesis. The chain is Protein PsbN from Sagittaria latifolia (Broadleaf arrowhead).